Here is a 443-residue protein sequence, read N- to C-terminus: tRNA-2-methylthio-N(6)-dimethylallyladenosine synthase (443 aa).

Positions 3 to 120 (SKLYIRTFGC…LPDLIDARRR (118 aa)) constitute an MTTase N-terminal domain. Positions 12, 49, 83, 157, 161, and 164 each coordinate [4Fe-4S] cluster. In terms of domain architecture, Radical SAM core spans 143-375 (RTEGSTAFVS…QEKIQLNAQA (233 aa)). The 64-residue stretch at 378–441 (QGMVDTVQRI…SHTLRGEISD (64 aa)) folds into the TRAM domain.

It belongs to the methylthiotransferase family. MiaB subfamily. As to quaternary structure, monomer. It depends on [4Fe-4S] cluster as a cofactor.

Its subcellular location is the cytoplasm. It catalyses the reaction N(6)-dimethylallyladenosine(37) in tRNA + (sulfur carrier)-SH + AH2 + 2 S-adenosyl-L-methionine = 2-methylsulfanyl-N(6)-dimethylallyladenosine(37) in tRNA + (sulfur carrier)-H + 5'-deoxyadenosine + L-methionine + A + S-adenosyl-L-homocysteine + 2 H(+). Functionally, catalyzes the methylthiolation of N6-(dimethylallyl)adenosine (i(6)A), leading to the formation of 2-methylthio-N6-(dimethylallyl)adenosine (ms(2)i(6)A) at position 37 in tRNAs that read codons beginning with uridine. This Nitrosomonas europaea (strain ATCC 19718 / CIP 103999 / KCTC 2705 / NBRC 14298) protein is tRNA-2-methylthio-N(6)-dimethylallyladenosine synthase.